The following is a 315-amino-acid chain: tRNA dimethylallyltransferase (315 aa).

10-17 (GPTGVGKT) serves as a coordination point for ATP. 12 to 17 (TGVGKT) contacts substrate. The segment at 35-38 (DSMQ) is interaction with substrate tRNA.

Belongs to the IPP transferase family. In terms of assembly, monomer. Mg(2+) serves as cofactor.

The catalysed reaction is adenosine(37) in tRNA + dimethylallyl diphosphate = N(6)-dimethylallyladenosine(37) in tRNA + diphosphate. Catalyzes the transfer of a dimethylallyl group onto the adenine at position 37 in tRNAs that read codons beginning with uridine, leading to the formation of N6-(dimethylallyl)adenosine (i(6)A). This chain is tRNA dimethylallyltransferase, found in Thermodesulfovibrio yellowstonii (strain ATCC 51303 / DSM 11347 / YP87).